Reading from the N-terminus, the 218-residue chain is Adenylate kinase (218 aa).

10-15 (GAGKGT) is a binding site for ATP. An NMP region spans residues 30-59 (STGDMLRAAVKAGTPLGLQAKAVMDAGQLV). Residues Thr31, Arg36, 57–59 (QLV), 85–88 (GFPR), and Gln92 contribute to the AMP site. The LID stretch occupies residues 122–159 (GRRSHPASGRTYHVKFNPPKVEGKDDVTGEPLVQREDD). Residues Arg123 and 132-133 (TY) contribute to the ATP site. A disordered region spans residues 127 to 150 (PASGRTYHVKFNPPKVEGKDDVTG). AMP-binding residues include Arg156 and Arg167. Gly203 serves as a coordination point for ATP.

This sequence belongs to the adenylate kinase family. As to quaternary structure, monomer.

The protein resides in the cytoplasm. The catalysed reaction is AMP + ATP = 2 ADP. It functions in the pathway purine metabolism; AMP biosynthesis via salvage pathway; AMP from ADP: step 1/1. Catalyzes the reversible transfer of the terminal phosphate group between ATP and AMP. Plays an important role in cellular energy homeostasis and in adenine nucleotide metabolism. This Acidovorax ebreus (strain TPSY) (Diaphorobacter sp. (strain TPSY)) protein is Adenylate kinase.